The chain runs to 643 residues: Phosphomethylpyrimidine synthase (643 aa).

Substrate contacts are provided by residues asparagine 248, methionine 277, tyrosine 306, histidine 342, 362-364 (SRG), 403-406 (DGLR), and glutamate 442. Residue histidine 446 coordinates Zn(2+). Tyrosine 469 contacts substrate. Histidine 510 contacts Zn(2+). Cysteine 590, cysteine 593, and cysteine 598 together coordinate [4Fe-4S] cluster.

It belongs to the ThiC family. In terms of assembly, homodimer. Requires [4Fe-4S] cluster as cofactor.

The enzyme catalyses 5-amino-1-(5-phospho-beta-D-ribosyl)imidazole + S-adenosyl-L-methionine = 4-amino-2-methyl-5-(phosphooxymethyl)pyrimidine + CO + 5'-deoxyadenosine + formate + L-methionine + 3 H(+). It functions in the pathway cofactor biosynthesis; thiamine diphosphate biosynthesis. Its function is as follows. Catalyzes the synthesis of the hydroxymethylpyrimidine phosphate (HMP-P) moiety of thiamine from aminoimidazole ribotide (AIR) in a radical S-adenosyl-L-methionine (SAM)-dependent reaction. This is Phosphomethylpyrimidine synthase from Burkholderia orbicola (strain MC0-3).